The following is a 130-amino-acid chain: Small ribosomal subunit protein uS11c (130 aa).

The protein belongs to the universal ribosomal protein uS11 family. Part of the 30S ribosomal subunit.

It is found in the plastid. The protein resides in the chloroplast. This is Small ribosomal subunit protein uS11c from Marchantia polymorpha (Common liverwort).